Here is a 171-residue protein sequence, read N- to C-terminus: N5-carboxyaminoimidazole ribonucleotide mutase (171 aa).

Substrate-binding residues include Ser-10, Asp-13, and Arg-40.

Belongs to the AIR carboxylase family. Class I subfamily.

The catalysed reaction is 5-carboxyamino-1-(5-phospho-D-ribosyl)imidazole + H(+) = 5-amino-1-(5-phospho-D-ribosyl)imidazole-4-carboxylate. It functions in the pathway purine metabolism; IMP biosynthesis via de novo pathway; 5-amino-1-(5-phospho-D-ribosyl)imidazole-4-carboxylate from 5-amino-1-(5-phospho-D-ribosyl)imidazole (N5-CAIR route): step 2/2. Functionally, catalyzes the conversion of N5-carboxyaminoimidazole ribonucleotide (N5-CAIR) to 4-carboxy-5-aminoimidazole ribonucleotide (CAIR). In Thermotoga maritima (strain ATCC 43589 / DSM 3109 / JCM 10099 / NBRC 100826 / MSB8), this protein is N5-carboxyaminoimidazole ribonucleotide mutase.